A 542-amino-acid chain; its full sequence is Chaperonin GroEL 2 (542 aa).

ATP-binding positions include 30–33 (TLGP), K51, 87–91 (DGTTT), G415, and D494.

The protein belongs to the chaperonin (HSP60) family. In terms of assembly, forms a cylinder of 14 subunits composed of two heptameric rings stacked back-to-back. Interacts with the co-chaperonin GroES.

Its subcellular location is the cytoplasm. It carries out the reaction ATP + H2O + a folded polypeptide = ADP + phosphate + an unfolded polypeptide.. Its function is as follows. Together with its co-chaperonin GroES, plays an essential role in assisting protein folding. The GroEL-GroES system forms a nano-cage that allows encapsulation of the non-native substrate proteins and provides a physical environment optimized to promote and accelerate protein folding. The chain is Chaperonin GroEL 2 from Syntrophobacter fumaroxidans (strain DSM 10017 / MPOB).